The primary structure comprises 585 residues: Archaeosine synthase (585 aa).

Positions 516–584 constitute a PUA domain; the sequence is TKTVEIDGFV…IGVEIRHVEE (69 aa).

The protein belongs to the archaeosine synthase type 1 family. In terms of assembly, homodimer.

It catalyses the reaction 7-cyano-7-carbaguanosine(15) in tRNA + L-glutamine + H2O = archaeosine(15) in tRNA + L-glutamate. Its pathway is tRNA modification; archaeosine-tRNA biosynthesis. Functionally, is responsible for the final step in the biosynthesis of archaeosine, a modified nucleoside present in the dihydrouridine loop (D-loop) of archaeal tRNA. Catalyzes the conversion of 7-cyano-7-deazaguanine (preQ0)-modified tRNA to archaeosine-tRNA, transforming a nitrile group to a formamidine group. The polypeptide is Archaeosine synthase (Haloferax volcanii (strain ATCC 29605 / DSM 3757 / JCM 8879 / NBRC 14742 / NCIMB 2012 / VKM B-1768 / DS2) (Halobacterium volcanii)).